The following is a 119-amino-acid chain: Large ribosomal subunit protein bL20 (119 aa).

Belongs to the bacterial ribosomal protein bL20 family.

Functionally, binds directly to 23S ribosomal RNA and is necessary for the in vitro assembly process of the 50S ribosomal subunit. It is not involved in the protein synthesizing functions of that subunit. The chain is Large ribosomal subunit protein bL20 from Shewanella sediminis (strain HAW-EB3).